The primary structure comprises 509 residues: Tyrosine-protein kinase Lck (509 aa).

Gly-2 carries the N-myristoyl glycine lipid modification. The tract at residues 2–72 (GCGCSSHPED…DNLVIALHSY (71 aa)) is interactions with CD4 and CD8. 2 S-palmitoyl cysteine lipidation sites follow: Cys-3 and Cys-5. In terms of domain architecture, SH3 spans 61–121 (LQDNLVIALH…PFNFVAKANS (61 aa)). Lys-99 is covalently cross-linked (Glycyl lysine isopeptide (Lys-Gly) (interchain with G-Cter in ubiquitin)). Ser-102 bears the Phosphoserine mark. The SH2 domain maps to 127 to 224 (WFFKNLSRKD…GLCTRLSRPC (98 aa)). The interaction with PTPRH stretch occupies residues 154–242 (RESESTAGSF…WWEDEWEVPR (89 aa)). Thr-159 is subject to Phosphothreonine. Ser-162 is modified (phosphoserine). A Phosphotyrosine modification is found at Tyr-192. At Ser-194 the chain carries Phosphoserine. One can recognise a Protein kinase domain in the interval 245–498 (LKLVERLGAG…YLRSVLEDFF (254 aa)). Residues 251 to 259 (LGAGQFGEV) and Lys-273 contribute to the ATP site. Lys-276 participates in a covalent cross-link: Glycyl lysine isopeptide (Lys-Gly) (interchain with G-Cter in ubiquitin). Asp-364 serves as the catalytic Proton acceptor. The residue at position 394 (Tyr-394) is a Phosphotyrosine; by autocatalysis. The residue at position 505 (Tyr-505) is a Phosphotyrosine; by CSK.

The protein belongs to the protein kinase superfamily. Tyr protein kinase family. SRC subfamily. Binds to the cytoplasmic domain of cell surface receptors, such as AXL, CD2, CD4, CD5, CD8, CD44, CD45 and CD122. Also binds to effector molecules, such as PI4K, VAV1, RASA1, FYB1 and to other protein kinases including CDK1, RAF1, ZAP70 and SYK. Binds to phosphatidylinositol 3'-kinase (PI3K) from T-lymphocytes through its SH3 domain and to the tyrosine phosphorylated form of KHDRBS1/p70 through its SH2 domain. Interacts with SQSTM1. Interacts with phosphorylated LIME1. LIME1. Interacts with CBLB and PTPRH. Interacts with RUNX3. Forms a signaling complex with EPHA1, PTK2B and PI3-KINASE; upon activation by EFNA1 which may regulate T-lymphocytes migration. Associates with ZAP70 and RHOH; these interactions allow LCK-mediated RHOH and CD3 subunit phosphorylation in the presence of functional ZAP70. Interacts with CEACAM1 (via cytoplasmic domain); mediates CEACAM1 phosphorylation resulting in PTPN6 recruitment that dephosphorylates TCR stimulation-induced CD247 and ZAP70. Interacts with CD160. Interacts with CD48. Autophosphorylated on Tyr-394, increasing enzymatic activity, this site is dephosphorylated by PTN22. Phosphorylated on Tyr-505 by CSK, decreasing activity. Dephosphorylated by PTPRC/CD45. Dephosphorylation at Tyr-394 by PTPN2 negatively regulates T-cells differentiation. Dephosphorylation at Tyr-394 by DUSP22 negatively regulates T-cell receptor signaling. In terms of processing, myristoylation is required prior to palmitoylation. Post-translationally, palmitoylation regulates association with the plasma membrane and could be mediated by ZDHHC2. 'Lys-63'-linked ubiquitinated at Lys-99 and Lys-276 by UBR2; this modification is required for autophosphorylation at Tyr-394.

The protein resides in the cell membrane. It localises to the cytoplasm. The protein localises to the cytosol. It carries out the reaction L-tyrosyl-[protein] + ATP = O-phospho-L-tyrosyl-[protein] + ADP + H(+). Its activity is regulated as follows. The relative activities of the inhibitory tyrosine-protein kinase CSK and the activating tyrosine-protein phosphatase PTPRC/CD45 determine the level of LCK activity. These interactions allow rapid and efficient activation of LCK in response to TCR stimulation. Functionally, non-receptor tyrosine-protein kinase that plays an essential role in the selection and maturation of developing T-cells in the thymus and in the function of mature T-cells. Plays a key role in T-cell antigen receptor (TCR)-linked signal transduction pathways. Constitutively associated with the cytoplasmic portions of the CD4 and CD8 surface receptors. Association of the TCR with a peptide antigen-bound MHC complex facilitates the interaction of CD4 and CD8 with MHC class II and class I molecules, respectively, thereby recruiting the associated LCK protein to the vicinity of the TCR/CD3 complex. LCK then phosphorylates tyrosine residues within the immunoreceptor tyrosine-based activation motifs (ITAM) of the cytoplasmic tails of the TCR-gamma chains and CD3 subunits, initiating the TCR/CD3 signaling pathway. Once stimulated, the TCR recruits the tyrosine kinase ZAP70, that becomes phosphorylated and activated by LCK. Following this, a large number of signaling molecules are recruited, ultimately leading to lymphokine production. LCK also contributes to signaling by other receptor molecules. Associates directly with the cytoplasmic tail of CD2, which leads to hyperphosphorylation and activation of LCK. Also plays a role in the IL2 receptor-linked signaling pathway that controls the T-cell proliferative response. Binding of IL2 to its receptor results in increased activity of LCK. Is expressed at all stages of thymocyte development and is required for the regulation of maturation events that are governed by both pre-TCR and mature alpha beta TCR. Phosphorylates other substrates including RUNX3, PTK2B/PYK2, the microtubule-associated protein MAPT, RHOH or TYROBP. Interacts with UNC119; this interaction plays a crucial role in activation of LCK. The protein is Tyrosine-protein kinase Lck (LCK) of Aotus nancymaae (Ma's night monkey).